We begin with the raw amino-acid sequence, 289 residues long: F-actin-capping protein subunit beta (289 aa).

Positions 73 to 110 are disordered; the sequence is RSPWSNQFDPPLEGGNQGGSGGDGEGDGGEGGAAGSIM. The span at 87–106 shows a compositional bias: gly residues; that stretch reads GNQGGSGGDGEGDGGEGGAA.

Belongs to the F-actin-capping protein beta subunit family. As to quaternary structure, component of the F-actin capping complex, composed of a heterodimer of an alpha and a beta subunit.

Its subcellular location is the cytoplasm. It is found in the cytoskeleton. The protein localises to the actin patch. Functionally, F-actin-capping proteins bind in a Ca(2+)-independent manner to the fast growing ends of actin filaments (barbed end) thereby blocking the exchange of subunits at these ends. Unlike other capping proteins (such as gelsolin and severin), these proteins do not sever actin filaments. This is F-actin-capping protein subunit beta (fac-2) from Neurospora crassa (strain ATCC 24698 / 74-OR23-1A / CBS 708.71 / DSM 1257 / FGSC 987).